The primary structure comprises 177 residues: Large ribosomal subunit protein uL6 (177 aa).

The protein belongs to the universal ribosomal protein uL6 family. As to quaternary structure, part of the 50S ribosomal subunit.

Functionally, this protein binds to the 23S rRNA, and is important in its secondary structure. It is located near the subunit interface in the base of the L7/L12 stalk, and near the tRNA binding site of the peptidyltransferase center. The sequence is that of Large ribosomal subunit protein uL6 from Xanthobacter autotrophicus (strain ATCC BAA-1158 / Py2).